We begin with the raw amino-acid sequence, 84 residues long: Cytochrome b559 subunit alpha (84 aa).

Residues 2–20 (AGTTGERPFSDIITSVRYW) are Cytoplasmic-facing. The helical transmembrane segment at 21 to 35 (VIHSITIPALFIAGW) threads the bilayer. H23 is a binding site for heme. The Lumenal portion of the chain corresponds to 36-84 (LFVSTGLAYDVFGTPRPDSYYAQEQRSIPLVTDRFEAKQQVETFLEQLK).

It belongs to the PsbE/PsbF family. In terms of assembly, heterodimer of an alpha subunit and a beta subunit. PSII is composed of 1 copy each of membrane proteins PsbA, PsbB, PsbC, PsbD, PsbE, PsbF, PsbH, PsbI, PsbJ, PsbK, PsbL, PsbM, PsbT, PsbX, PsbY, PsbZ, Psb30/Ycf12, peripheral proteins PsbO, CyanoQ (PsbQ), PsbU, PsbV and a large number of cofactors. It forms dimeric complexes. Requires heme b as cofactor.

Its subcellular location is the cellular thylakoid membrane. Functionally, this b-type cytochrome is tightly associated with the reaction center of photosystem II (PSII). PSII is a light-driven water:plastoquinone oxidoreductase that uses light energy to abstract electrons from H(2)O, generating O(2) and a proton gradient subsequently used for ATP formation. It consists of a core antenna complex that captures photons, and an electron transfer chain that converts photonic excitation into a charge separation. This chain is Cytochrome b559 subunit alpha, found in Thermostichus vulcanus (Synechococcus vulcanus).